A 716-amino-acid chain; its full sequence is MTVQLTDEAYAVLEGRHADPFHYLGPHSEDNRVVVRALLPDATAVEAVGEHGETAHLERVHESGLFAGSLPNGSHRYQLRARFGDTTVDLEDPYRFPPILTDFDLYLLGEGTDQRLYDKLGAHPMALEGVNGVAFVVLAPNARRVSVVGDFNFWNPRRHQMRVRGNGYWELFVPGAAAGDHYKFDVVGPHGEQLPQKSDPMAFAAELRPKTASIVVDQTRLPQPRPAPAQINALGAPMSIYEVHLGSWRRKDGEQWLSYRELAETLPAYVREMGFTHVEFLPVSEHPFDGSWGYQPTGLYAPTSRFGTPEDFCALIDAFHAQGIGVLLDWVPGHFPDDPHGLGHFDGTALYEHANPLQGRHLDWGTLIYNYGRTEVVNFLVSNALFWLERYGIDGLRVDAVASMLYLDYSRPADGWVPNKFGGRENIEAIDFLRRFNAEVFAKFPHVTTAAEESTAWPQVSRPVEFGGLGFGYKWNMGWMHDTLNYISKDPIHRKFHHGQILFGLHYAFSENFILPLSHDEVVHGKRSILGRMPGDEWQRFANLRAYYAFMFAHPGKKLMFMGSEFGQEREWNHDRSLDWHLLDTPKYAGIQALVRDLNRLYRTLPALHQLDCDPFGFEWLVTDDADRNVFAWMRKGDDPRARCLVIANFSPNVYEDYRVRVPFPGRWREALNSDSAVYGGSNVGNAGEVHTLDGLVPELSLTIPPLAAIFLTPED.

Asp399 functions as the Nucleophile in the catalytic mechanism. The active-site Proton donor is the Glu452.

It belongs to the glycosyl hydrolase 13 family. GlgB subfamily. In terms of assembly, monomer.

It carries out the reaction Transfers a segment of a (1-&gt;4)-alpha-D-glucan chain to a primary hydroxy group in a similar glucan chain.. The protein operates within glycan biosynthesis; glycogen biosynthesis. In terms of biological role, catalyzes the formation of the alpha-1,6-glucosidic linkages in glycogen by scission of a 1,4-alpha-linked oligosaccharide from growing alpha-1,4-glucan chains and the subsequent attachment of the oligosaccharide to the alpha-1,6 position. The polypeptide is 1,4-alpha-glucan branching enzyme GlgB (Rhodopseudomonas palustris (strain BisB5)).